The primary structure comprises 543 residues: Excitatory amino acid transporter 1 (543 aa).

The Cytoplasmic segment spans residues 1–47; the sequence is MTKSNGEEPRMGSRMERFQQGVRKRTLLAKKKVQNITKEDVKSYLFR. The chain crosses the membrane as a helical span at residues 48–68; that stretch reads NAFVLLTVSAVIVGTILGFAL. The Extracellular portion of the chain corresponds to 69–86; that stretch reads RPYKMSYREVKYFSFPGE. A helical membrane pass occupies residues 87-108; it reads LLMRMLQMLVLPLIISSLVTGM. Topologically, residues 109–122 are cytoplasmic; sequence AALDSKASGKMGMR. A helical transmembrane segment spans residues 123-145; the sequence is AVVYYMTTTIIAVVIGIIIVIII. The Extracellular portion of the chain corresponds to 146 to 236; that stretch reads HPGKGTKENM…IREEMVPVPG (91 aa). A helical transmembrane segment spans residues 237–260; it reads SVNGVNALGLVVFSMCFGFVIGNM. The Cytoplasmic portion of the chain corresponds to 261–269; that stretch reads KEQGQALRE. A helical transmembrane segment spans residues 270 to 297; sequence FFDSLNEAIMRLVAVIMWYAPLGILFLI. The Extracellular portion of the chain corresponds to 298-318; sequence AGKILEMEDMGVIGGQLAMYT. A helical membrane pass occupies residues 319–340; that stretch reads VTVIVGLLIHAVIVLPLLYFLV. Topologically, residues 341 to 345 are cytoplasmic; sequence TRKNP. Residues 346-376 constitute an intramembrane region (discontinuously helical); the sequence is WVFIGGLLQALITALGTSSSSATLPITFKCL. 363–365 is an L-aspartate binding site; sequence SSS. Topologically, residues 377 to 385 are cytoplasmic; that stretch reads EENNGVDKR. A helical membrane pass occupies residues 386–412; that stretch reads ITRFVLPVGATINMDGTALYEALAAIF. Na(+) is bound by residues glycine 394, threonine 396, and asparagine 398. Threonine 402 provides a ligand contact to L-aspartate. Over 413 to 425 the chain is Extracellular; that stretch reads IAQVNNFDLNFGQ. The segment at residues 426-459 is an intramembrane region (discontinuously helical); that stretch reads IITISITATAASIGAAGIPQAGLVTMVIVLTSVG. L-aspartate is bound at residue 443-447; it reads IPQAG. Topologically, residues 460–472 are extracellular; the sequence is LPTDDITLIIAVD. A helical membrane pass occupies residues 473 to 494; the sequence is WFLDRLRTTTNVLGDSLGAGIV. Positions 476 and 483 each coordinate L-aspartate. Na(+) contacts are provided by asparagine 483 and aspartate 487. Residues 495–543 are Cytoplasmic-facing; sequence EHLSRHELKNRDVEMGNSVIEENEMKKPYQLIAQDNEPEKPVADSETKM. Serine 512 bears the Phosphoserine mark. The interval 522-543 is disordered; sequence PYQLIAQDNEPEKPVADSETKM. Basic and acidic residues predominate over residues 531–543; it reads EPEKPVADSETKM.

Belongs to the dicarboxylate/amino acid:cation symporter (DAACS) (TC 2.A.23) family. SLC1A3 subfamily. As to quaternary structure, homotrimer. Post-translationally, glycosylated. In terms of tissue distribution, detected in brain and cerebellum. Both isoform GLAST-1 and GLAST-1A are expressed in bone and brain. In brain isoform GLAST-1 is highly enriched in the Purkinje cell layer in cerebellum.

The protein resides in the cell membrane. The catalysed reaction is K(+)(in) + L-glutamate(out) + 3 Na(+)(out) + H(+)(out) = K(+)(out) + L-glutamate(in) + 3 Na(+)(in) + H(+)(in). The enzyme catalyses K(+)(in) + L-aspartate(out) + 3 Na(+)(out) + H(+)(out) = K(+)(out) + L-aspartate(in) + 3 Na(+)(in) + H(+)(in). It catalyses the reaction D-aspartate(out) + K(+)(in) + 3 Na(+)(out) + H(+)(out) = D-aspartate(in) + K(+)(out) + 3 Na(+)(in) + H(+)(in). Its function is as follows. Sodium-dependent, high-affinity amino acid transporter that mediates the uptake of L-glutamate and also L-aspartate and D-aspartate. Functions as a symporter that transports one amino acid molecule together with two or three Na(+) ions and one proton, in parallel with the counter-transport of one K(+) ion. Plays a redundant role in the rapid removal of released glutamate from the synaptic cleft, which is essential for terminating the postsynaptic action of glutamate. The sequence is that of Excitatory amino acid transporter 1 (Slc1a3) from Rattus norvegicus (Rat).